The following is a 131-amino-acid chain: Small ribosomal subunit protein uS11 (131 aa).

Belongs to the universal ribosomal protein uS11 family. In terms of assembly, part of the 30S ribosomal subunit. Interacts with proteins S7 and S18. Binds to IF-3.

Its function is as follows. Located on the platform of the 30S subunit, it bridges several disparate RNA helices of the 16S rRNA. Forms part of the Shine-Dalgarno cleft in the 70S ribosome. The polypeptide is Small ribosomal subunit protein uS11 (Trichormus variabilis (strain ATCC 29413 / PCC 7937) (Anabaena variabilis)).